The sequence spans 691 residues: DNA ligase (691 aa).

Residues 41 to 45, 90 to 91, and E130 contribute to the NAD(+) site; these read DAEYD and SL. The N6-AMP-lysine intermediate role is filled by K132. Residues R153, E190, K307, and K331 each contribute to the NAD(+) site. C425, C428, C443, and C449 together coordinate Zn(2+). The BRCT domain occupies 610–691; that stretch reads APQGVLAGKT…MHTLLEGHAR (82 aa).

It belongs to the NAD-dependent DNA ligase family. LigA subfamily. It depends on Mg(2+) as a cofactor. Mn(2+) is required as a cofactor.

It carries out the reaction NAD(+) + (deoxyribonucleotide)n-3'-hydroxyl + 5'-phospho-(deoxyribonucleotide)m = (deoxyribonucleotide)n+m + AMP + beta-nicotinamide D-nucleotide.. DNA ligase that catalyzes the formation of phosphodiester linkages between 5'-phosphoryl and 3'-hydroxyl groups in double-stranded DNA using NAD as a coenzyme and as the energy source for the reaction. It is essential for DNA replication and repair of damaged DNA. This is DNA ligase from Burkholderia pseudomallei (strain 668).